Consider the following 88-residue polypeptide: Mitochondrial import inner membrane translocase subunit TIM9 (88 aa).

Positions 35-59 match the Twin CX3C motif motif; that stretch reads CFDDCVNDFTSNNLTTKETGCITKC. Disulfide bonds link Cys35–Cys59 and Cys39–Cys55.

This sequence belongs to the small Tim family. Heterohexamer; composed of 3 copies of TIM9 and 3 copies of TIM10, named soluble 70 kDa complex. Associates with the TIM22 complex, whose core is composed of TIM22 and TIM54. Interacts with the transmembrane regions of multi-pass transmembrane proteins in transit.

The protein localises to the mitochondrion inner membrane. In terms of biological role, mitochondrial intermembrane chaperone that participates in the import and insertion of multi-pass transmembrane proteins into the mitochondrial inner membrane. Also required for the transfer of beta-barrel precursors from the TOM complex to the sorting and assembly machinery (SAM complex) of the outer membrane. Acts as a chaperone-like protein that protects the hydrophobic precursors from aggregation and guide them through the mitochondrial intermembrane space. The polypeptide is Mitochondrial import inner membrane translocase subunit TIM9 (TIM9) (Debaryomyces hansenii (strain ATCC 36239 / CBS 767 / BCRC 21394 / JCM 1990 / NBRC 0083 / IGC 2968) (Yeast)).